The sequence spans 228 residues: Demethylmenaquinone methyltransferase (228 aa).

S-adenosyl-L-methionine is bound by residues T62, D80, 100–101 (DA), and S117.

Belongs to the class I-like SAM-binding methyltransferase superfamily. MenG/UbiE family.

It catalyses the reaction a 2-demethylmenaquinol + S-adenosyl-L-methionine = a menaquinol + S-adenosyl-L-homocysteine + H(+). It participates in quinol/quinone metabolism; menaquinone biosynthesis; menaquinol from 1,4-dihydroxy-2-naphthoate: step 2/2. In terms of biological role, methyltransferase required for the conversion of demethylmenaquinol (DMKH2) to menaquinol (MKH2). This chain is Demethylmenaquinone methyltransferase, found in Mycolicibacterium vanbaalenii (strain DSM 7251 / JCM 13017 / BCRC 16820 / KCTC 9966 / NRRL B-24157 / PYR-1) (Mycobacterium vanbaalenii).